A 253-amino-acid polypeptide reads, in one-letter code: ATP synthase subunit b 1 (253 aa).

A helical transmembrane segment spans residues 5 to 27; that stretch reads GWTVALQAVNFLILVLLLRHFLY.

The protein belongs to the ATPase B chain family. F-type ATPases have 2 components, F(1) - the catalytic core - and F(0) - the membrane proton channel. F(1) has five subunits: alpha(3), beta(3), gamma(1), delta(1), epsilon(1). F(0) has three main subunits: a(1), b(2) and c(10-14). The alpha and beta chains form an alternating ring which encloses part of the gamma chain. F(1) is attached to F(0) by a central stalk formed by the gamma and epsilon chains, while a peripheral stalk is formed by the delta and b chains.

The protein localises to the cell inner membrane. In terms of biological role, f(1)F(0) ATP synthase produces ATP from ADP in the presence of a proton or sodium gradient. F-type ATPases consist of two structural domains, F(1) containing the extramembraneous catalytic core and F(0) containing the membrane proton channel, linked together by a central stalk and a peripheral stalk. During catalysis, ATP synthesis in the catalytic domain of F(1) is coupled via a rotary mechanism of the central stalk subunits to proton translocation. Its function is as follows. Component of the F(0) channel, it forms part of the peripheral stalk, linking F(1) to F(0). The sequence is that of ATP synthase subunit b 1 from Rhodospirillum centenum (strain ATCC 51521 / SW).